Consider the following 38-residue polypeptide: L-amino-acid oxidase (38 aa).

This sequence belongs to the flavin monoamine oxidase family. FIG1 subfamily. As to quaternary structure, homodimer; non-covalently linked. The cofactor is FAD. N-glycosylated. In terms of tissue distribution, expressed by the venom gland.

It is found in the secreted. The enzyme catalyses an L-alpha-amino acid + O2 + H2O = a 2-oxocarboxylate + H2O2 + NH4(+). It carries out the reaction L-leucine + O2 + H2O = 4-methyl-2-oxopentanoate + H2O2 + NH4(+). The catalysed reaction is L-phenylalanine + O2 + H2O = 3-phenylpyruvate + H2O2 + NH4(+). It catalyses the reaction L-tryptophan + O2 + H2O = indole-3-pyruvate + H2O2 + NH4(+). The enzyme catalyses L-methionine + O2 + H2O = 4-methylsulfanyl-2-oxobutanoate + H2O2 + NH4(+). It carries out the reaction L-arginine + O2 + H2O = 5-guanidino-2-oxopentanoate + H2O2 + NH4(+). The catalysed reaction is L-2-aminohexanoate + O2 + H2O = 2-oxohexanoate + H2O2 + NH4(+). It catalyses the reaction L-2-aminopentanoate + O2 + H2O = 2-oxopentanoate + H2O2 + NH4(+). The enzyme catalyses L-tyrosine + O2 + H2O = 3-(4-hydroxyphenyl)pyruvate + H2O2 + NH4(+). Catalyzes an oxidative deamination of predominantly hydrophobic and aromatic L-amino acids, thus producing hydrogen peroxide that may contribute to the diverse toxic effects of this enzyme. Is very active against L-Phe and L-Tyr, moderately active against L-Trp, L-Met, L-Leu, L-norleucine (L-2-aminohexanoate), L-Arg and L-norvaline (L-2-aminopentanoate), and slightly active against L-His, L-cystine, and L-Ile. L-Gln, L-Lys, L-Asn, L-ornithine, L-Ala and L-Val are oxidized very slowly. Exhibits diverse biological activities, such as hemorrhage, hemolysis, edema, apoptosis of vascular endothelial cells or tumor cell lines, antibacterial and antiparasitic activities. This protein inhibits both agonist- and shear stress-induced platelet aggregation (SIPA). Effects of snake L-amino oxidases on platelets are controversial, since they either induce aggregation or inhibit agonist-induced aggregation. These different effects are probably due to different experimental conditions. This is L-amino-acid oxidase from Naja kaouthia (Monocled cobra).